The following is a 392-amino-acid chain: MASVEEIRNAQRAKGPATILAIGTATPDHCVYQSDYADYYFKVTKSEHMTELKKKFNRICDKSMIKKRYIHLTEEMLEEHPNIGAYMAPSLNIRQEIITAEVPKLGKEAALKALKEWGQPKSKITHLVFCTTSGVEMPGADYKLANLLGLETSVRRVMLYHQGCYAGGTVLRTAKDLAENNAGARVLVVCSEITVVTFRGPSEDALDSLVGQALFGDGSAAVIVGSDPNVSIERPLFQLVSAAQTFIPNSAGAIAGNLREVGLTFHLWPNVPTLISENIEKCLSQAFDPLGISNWNSLFWIAHPGGPAILDAVEAKLNLEKKKLEATRHVLSEYGNMSSACVLFILDEMRKKSLKGEKATTGEGLDWGVLFGFGPGLTIETVVLHSVPMVTN.

55–58 (KFNR) contributes to the substrate binding site. Cysteine 164 is a catalytic residue. Substrate is bound by residues leucine 267 and 305–307 (GGP).

The protein belongs to the thiolase-like superfamily. Chalcone/stilbene synthases family. In terms of assembly, homodimer.

The protein localises to the cytoplasm. It carries out the reaction 4-coumaroyl-CoA + 3 malonyl-CoA + 3 H(+) = trans-resveratrol + 4 CO2 + 4 CoA. It functions in the pathway phytoalexin biosynthesis; 3,4',5-trihydroxystilbene biosynthesis; 3,4',5-trihydroxystilbene from trans-4-coumarate: step 2/2. Its function is as follows. Mediates resistance to pathogens which are sensitive to stilbenes. This chain is Stilbene synthase 5, found in Vitis vinifera (Grape).